The sequence spans 614 residues: Major facilitator superfamily domain-containing protein 6-like protein B (614 aa).

2 helical membrane passes run 41 to 61 (LGLG…VHLL) and 78 to 98 (FFIM…AFYP). Residues 177-191 (HQRFTDQFPSSSPLT) are compositionally biased toward polar residues. Positions 177-243 (HQRFTDQFPS…PFATHPNVSH (67 aa)) are disordered. Residues 205-227 (GSGKAQKANSSKSSASNSKQRSS) show a composition bias toward low complexity. A run of 9 helical transmembrane segments spans residues 270-290 (IFLI…PLEW), 312-332 (LWIW…FLID), 345-365 (VSFH…LSTL), 393-413 (IVLT…IQNF), 425-445 (ELYM…LYFF), 457-477 (WMVV…SFLW), 480-500 (WSVV…WWAI), 520-540 (LRWL…GFII), and 546-566 (AVLY…FLLV).

The protein belongs to the major facilitator superfamily. MFSD6 family.

It localises to the membrane. This Xenopus laevis (African clawed frog) protein is Major facilitator superfamily domain-containing protein 6-like protein B (mfsd6l-b).